A 164-amino-acid polypeptide reads, in one-letter code: Endoribonuclease YbeY (164 aa).

3 residues coordinate Zn(2+): histidine 114, histidine 118, and histidine 124.

This sequence belongs to the endoribonuclease YbeY family. Requires Zn(2+) as cofactor.

It localises to the cytoplasm. Functionally, single strand-specific metallo-endoribonuclease involved in late-stage 70S ribosome quality control and in maturation of the 3' terminus of the 16S rRNA. The chain is Endoribonuclease YbeY from Mycoplasmoides gallisepticum (strain R(low / passage 15 / clone 2)) (Mycoplasma gallisepticum).